The primary structure comprises 667 residues: Receptor for retinol uptake STRA6 (667 aa).

Residues 1–13 (MSSQPAGNQTSPG) show a composition bias toward polar residues. The tract at residues 1 to 22 (MSSQPAGNQTSPGPTEDYSYGS) is disordered. Over 1–50 (MSSQPAGNQTSPGPTEDYSYGSWYIDEPQGGEELQPEGEVPSCHTSIPPS) the chain is Extracellular. N-linked (GlcNAc...) asparagine glycosylation is present at Asn8. The chain crosses the membrane as a helical span at residues 51–71 (LYHACLASLSILVLLLLAMLV). At 72–98 (RRRQLWPDCVRGRPGLPSPVDFLAGDR) the chain is on the cytoplasmic side. The helical transmembrane segment at 99-119 (PQAVPAAVFVVLFSSLCLLLP) threads the bilayer. Residues 120 to 144 (DEDPLPFLTLASAPSQDGKTEAPRG) are Extracellular-facing. The helical transmembrane segment at 145–165 (AWKILGLFYYAALCYPLAACA) threads the bilayer. Residues 166–168 (TAG) lie on the Cytoplasmic side of the membrane. Residues 169-189 (HTAAHLLGSTLSWAHLGVQVW) form a helical membrane-spanning segment. Residues 190–205 (QRAECPQVPKIYKYYS) are Extracellular-facing. Residues 206-226 (LLASLPLLLGLGFLSLWYPVQ) form a helical membrane-spanning segment. The Cytoplasmic portion of the chain corresponds to 227–295 (LVRSFSCRTG…PQPGFRLPLK (69 aa)). The interaction with RBP1 stretch occupies residues 235 to 293 (TGAGSKGLQSSYSEEYLRNLLCRKKLGSSSHTSKHGFLSWAWVCLRHCIYTPQPGFRLP). The helical transmembrane segment at 296-316 (LVLSATLTGTAIYQVALLLLV) threads the bilayer. Residues 317–367 (GMVPNIQKVRAGVTTDVSYLLAGFGIVLSEDKQEVVELVKHHLWALEVCYI) lie on the Extracellular side of the membrane. The helical transmembrane segment at 368–388 (SALVLSCSLTFLVLMRSLVTH) threads the bilayer. The Cytoplasmic segment spans residues 389 to 422 (RTNLRALHRGAALDSSPLHRSPHPSRRAIFCWMS). A helical membrane pass occupies residues 423-443 (FSAYQTAFICLGLLVQQIIFF). Residues 444 to 473 (LGTTALAFLVLMPVLHGRNLLLFRSLESSW) are Extracellular-facing. Residues 474-494 (PFWLTLALAVILQSMAAHWVF) form a helical membrane-spanning segment. Residues 495–509 (LETHDGHPQLTNRRV) lie on the Cytoplasmic side of the membrane. An intramembrane region (helical) is located at residues 510–547 (LYAATFLLFPLNVLVGAMVATWRVLLSALYNAIHLGQM). Residues 548–667 (DLSLLPPRAA…ALLGANGAQP (120 aa)) are Cytoplasmic-facing. Tyr643 bears the Phosphotyrosine mark.

As to quaternary structure, homodimer. Interacts with JAK2 and STAT5. Interacts (via extracellular domains) with RBP4. Interacts (via cytoplasmic domains) with RBP1. In terms of processing, phosphorylated on tyrosine residues in response to RBP4 binding. Phosphorylation requires the presence of LRAT, suggesting it may be triggered by the uptake of retinol that is then metabolized within the cell to retinoids that function as signaling molecules.

It is found in the cell membrane. Functions as a retinol transporter. Accepts all-trans retinol from the extracellular retinol-binding protein RBP4, facilitates retinol transport across the cell membrane, and then transfers retinol to the cytoplasmic retinol-binding protein RBP1. Retinol uptake is enhanced by LRAT, an enzyme that converts retinol to all-trans retinyl esters, the storage forms of vitamin A. Contributes to the activation of a signaling cascade that depends on retinol transport and LRAT-dependent generation of retinol metabolites that then trigger activation of JAK2 and its target STAT5, and ultimately increase the expression of SOCS3 and inhibit cellular responses to insulin. Important for the homeostasis of vitamin A and its derivatives, such as retinoic acid. STRA6-mediated transport is particularly important in the eye, and under conditions of dietary vitamin A deficiency. Does not transport retinoic acid. The polypeptide is Receptor for retinol uptake STRA6 (STRA6) (Pongo abelii (Sumatran orangutan)).